The primary structure comprises 2051 residues: Autophagy-related protein 2 (2051 aa).

In terms of domain architecture, Chorein N-terminal spans 31–121; it reads QALDLDNLNF…QDEQTAKNKK (91 aa). Basic and acidic residues predominate over residues 108–117; it reads SKQEQDEQTA. Disordered regions lie at residues 108–129, 152–179, 297–331, 363–384, 419–466, and 501–564; these read SKQEQDEQTAKNKKGTHKDGDE, RRLEKALAEEAQEALSESMSDSETDDDG, SLVKPQGPAPHDVPSTLRDMSGSMQSSVGGLDMSI, DTQYPEAEENVAGSSPLSTPRA, RSEP…ADTE, and PGGW…DTST. Polar residues-rich tracts occupy residues 374-383 and 426-435; these read AGSSPLSTPR and PPTSFQPQTM. Residues 436-454 are compositionally biased toward low complexity; it reads PSGAVSPAPSEPSSSASSV.

It belongs to the ATG2 family.

It localises to the preautophagosomal structure membrane. It is found in the endoplasmic reticulum membrane. The enzyme catalyses a 1,2-diacyl-sn-glycero-3-phosphocholine(in) = a 1,2-diacyl-sn-glycero-3-phosphocholine(out). The catalysed reaction is a 1,2-diacyl-sn-glycero-3-phospho-L-serine(in) = a 1,2-diacyl-sn-glycero-3-phospho-L-serine(out). It carries out the reaction a 1,2-diacyl-sn-glycero-3-phosphoethanolamine(in) = a 1,2-diacyl-sn-glycero-3-phosphoethanolamine(out). Lipid transfer protein required for autophagosome completion and peroxisome degradation. Tethers the edge of the isolation membrane (IM) to the endoplasmic reticulum (ER) and mediates direct lipid transfer from ER to IM for IM expansion. Atg-2 binds to the ER exit site (ERES), which is the membrane source for autophagosome formation, using basic residues in its N-terminal region (NR) and to the expanding edge of the IM through its C-terminal region. The latter binding is assisted by an atg-18-PtdIns3P interaction. Atg-2 then extracts phospholipids from the membrane source using its NR and transfers them to atg-9 to the IM through its predicted beta-sheet-rich structure for membrane expansion. This is Autophagy-related protein 2 (apg-2) from Neurospora crassa (strain ATCC 24698 / 74-OR23-1A / CBS 708.71 / DSM 1257 / FGSC 987).